A 634-amino-acid chain; its full sequence is DNA gyrase subunit B (634 aa).

In terms of domain architecture, Toprim spans 416 to 530; the sequence is REIYIVEGDS…NGHVYIAMPP (115 aa). Positions 422, 495, and 497 each coordinate Mg(2+).

It belongs to the type II topoisomerase GyrB family. As to quaternary structure, heterotetramer, composed of two GyrA and two GyrB chains. In the heterotetramer, GyrA contains the active site tyrosine that forms a transient covalent intermediate with DNA, while GyrB binds cofactors and catalyzes ATP hydrolysis. Mg(2+) is required as a cofactor. It depends on Mn(2+) as a cofactor. The cofactor is Ca(2+).

It localises to the cytoplasm. The catalysed reaction is ATP-dependent breakage, passage and rejoining of double-stranded DNA.. Its function is as follows. A type II topoisomerase that negatively supercoils closed circular double-stranded (ds) DNA in an ATP-dependent manner to modulate DNA topology and maintain chromosomes in an underwound state. Negative supercoiling favors strand separation, and DNA replication, transcription, recombination and repair, all of which involve strand separation. Also able to catalyze the interconversion of other topological isomers of dsDNA rings, including catenanes and knotted rings. Type II topoisomerases break and join 2 DNA strands simultaneously in an ATP-dependent manner. In Borrelia hermsii, this protein is DNA gyrase subunit B.